The primary structure comprises 30 residues: Basic phospholipase A2 CM-I (30 aa).

The protein belongs to the phospholipase A2 family. Group I subfamily. It depends on Ca(2+) as a cofactor. Expressed by the venom gland.

The protein localises to the secreted. The enzyme catalyses a 1,2-diacyl-sn-glycero-3-phosphocholine + H2O = a 1-acyl-sn-glycero-3-phosphocholine + a fatty acid + H(+). In terms of biological role, snake venom phospholipase A2 (PLA2) that shows weak anticoagulant activity. Is more catalytically active than the strong anticoagulant protein CM-IV found in this venom. Acts by inhibiting the complex composed of tissue factor (F3) and coagulation factor VIIa (F7) (TF-VIIa complex) by only enzymatic mechanism. PLA2 catalyzes the calcium-dependent hydrolysis of the 2-acyl groups in 3-sn-phosphoglycerides. In Naja nigricollis (Black-necked spitting cobra), this protein is Basic phospholipase A2 CM-I.